Reading from the N-terminus, the 252-residue chain is Chitooligosaccharide deacetylase (252 aa).

2 residues coordinate Mg(2+): His61 and His125.

Belongs to the YdjC deacetylase family. ChbG subfamily. Homodimer. The cofactor is Mg(2+).

The protein localises to the cytoplasm. The enzyme catalyses N,N'-diacetylchitobiose + H2O = N-acetyl-beta-D-glucosaminyl-(1-&gt;4)-D-glucosamine + acetate. It catalyses the reaction diacetylchitobiose-6'-phosphate + H2O = N'-monoacetylchitobiose-6'-phosphate + acetate. It functions in the pathway glycan degradation; chitin degradation. Functionally, involved in the degradation of chitin. ChbG is essential for growth on the acetylated chitooligosaccharides chitobiose and chitotriose but is dispensable for growth on cellobiose and chitosan dimer, the deacetylated form of chitobiose. Deacetylation of chitobiose-6-P and chitotriose-6-P is necessary for both the activation of the chb promoter by the regulatory protein ChbR and the hydrolysis of phosphorylated beta-glucosides by the phospho-beta-glucosidase ChbF. Catalyzes the removal of only one acetyl group from chitobiose-6-P to yield monoacetylchitobiose-6-P, the inducer of ChbR and the substrate of ChbF. This Escherichia coli (strain 55989 / EAEC) protein is Chitooligosaccharide deacetylase.